Here is a 501-residue protein sequence, read N- to C-terminus: ATP synthase subunit alpha (501 aa).

169–176 (GDRQTGKT) contacts ATP.

The protein belongs to the ATPase alpha/beta chains family. In terms of assembly, F-type ATPases have 2 components, CF(1) - the catalytic core - and CF(0) - the membrane proton channel. CF(1) has five subunits: alpha(3), beta(3), gamma(1), delta(1), epsilon(1). CF(0) has three main subunits: a(1), b(2) and c(9-12). The alpha and beta chains form an alternating ring which encloses part of the gamma chain. CF(1) is attached to CF(0) by a central stalk formed by the gamma and epsilon chains, while a peripheral stalk is formed by the delta and b chains.

The protein localises to the cell membrane. The enzyme catalyses ATP + H2O + 4 H(+)(in) = ADP + phosphate + 5 H(+)(out). Functionally, produces ATP from ADP in the presence of a proton gradient across the membrane. The alpha chain is a regulatory subunit. In Desulforamulus reducens (strain ATCC BAA-1160 / DSM 100696 / MI-1) (Desulfotomaculum reducens), this protein is ATP synthase subunit alpha.